Here is a 698-residue protein sequence, read N- to C-terminus: Elongation factor G (698 aa).

Residues 10-285 (AATRNIGIMA…AVVDFLPSPT (276 aa)) enclose the tr-type G domain. GTP is bound by residues 19 to 26 (AHIDAGKT), 83 to 87 (DTPGH), and 137 to 140 (NKMD).

This sequence belongs to the TRAFAC class translation factor GTPase superfamily. Classic translation factor GTPase family. EF-G/EF-2 subfamily.

It is found in the cytoplasm. Catalyzes the GTP-dependent ribosomal translocation step during translation elongation. During this step, the ribosome changes from the pre-translocational (PRE) to the post-translocational (POST) state as the newly formed A-site-bound peptidyl-tRNA and P-site-bound deacylated tRNA move to the P and E sites, respectively. Catalyzes the coordinated movement of the two tRNA molecules, the mRNA and conformational changes in the ribosome. In Parafrankia sp. (strain EAN1pec), this protein is Elongation factor G.